Here is a 66-residue protein sequence, read N- to C-terminus: DNA gyrase inhibitor YacG (66 aa).

4 residues coordinate Zn(2+): C9, C12, C28, and C32.

It belongs to the DNA gyrase inhibitor YacG family. In terms of assembly, interacts with GyrB. It depends on Zn(2+) as a cofactor.

In terms of biological role, inhibits all the catalytic activities of DNA gyrase by preventing its interaction with DNA. Acts by binding directly to the C-terminal domain of GyrB, which probably disrupts DNA binding by the gyrase. This is DNA gyrase inhibitor YacG from Pseudomonas fluorescens (strain SBW25).